The sequence spans 115 residues: Non-specific lipid-transfer protein Cw18 (115 aa).

An N-terminal signal peptide occupies residues 1 to 25 (MARTAATKLALVALVAAMLLVAADA). Intrachain disulfides connect C29-C77, C39-C54, C55-C97, and C75-C111.

The protein belongs to the plant LTP family. Highly expressed in leaves and coleoptiles. No expression in roots.

Plant non-specific lipid-transfer proteins transfer phospholipids as well as galactolipids across membranes. May play a role in wax or cutin deposition in the cell walls of expanding epidermal cells and certain secretory tissues. This chain is Non-specific lipid-transfer protein Cw18 (CW18), found in Hordeum vulgare (Barley).